Consider the following 198-residue polypeptide: Alpha1-proteinase inhibitor-degradation deficient protein 37 (198 aa).

Ser-79 carries the post-translational modification Phosphoserine.

Its subcellular location is the cytoplasm. Involved in ER-associated protein degradation (ERAD). The polypeptide is Alpha1-proteinase inhibitor-degradation deficient protein 37 (ADD37) (Saccharomyces cerevisiae (strain ATCC 204508 / S288c) (Baker's yeast)).